The chain runs to 385 residues: Protein delta homolog 1 (385 aa).

An N-terminal signal peptide occupies residues 1–23; the sequence is MIATGALLRVLLLLLAFGHSTYG. EGF-like domains follow at residues 24 to 55, 53 to 86, 88 to 125, 127 to 168, 172 to 208, and 210 to 247; these read AECD…PLCD, LCDK…KFCE, DVRA…KDCQ, KAGP…NFCE, ATNS…KTCS, and PVSN…PTCA. The Extracellular segment spans residues 24-305; sequence AECDPPCDPQ…KSTPLLTEGQ (282 aa). Disulfide bonds link Cys26-Cys37, Cys30-Cys43, Cys45-Cys54, Cys57-Cys68, Cys63-Cys74, Cys76-Cys85, Cys92-Cys103, Cys97-Cys113, Cys115-Cys124, Cys131-Cys144, Cys138-Cys156, and Cys158-Cys167. An O-linked (GalNAc...) serine glycan is attached at Ser94. Asn100 is a glycosylation site (N-linked (GlcNAc...) asparagine). Residue Asn165 is glycosylated (N-linked (GlcNAc...) asparagine; atypical; partial). N-linked (GlcNAc...) asparagine; atypical glycosylation is present at Asn174. Disulfide bonds link Cys176–Cys187, Cys181–Cys196, Cys198–Cys207, Cys214–Cys225, Cys219–Cys235, and Cys237–Cys246. Ser216 is a glycosylation site (O-linked (GalNAc...) serine). Thr224 is a glycosylation site (O-linked (GalNAc...) threonine). The O-linked (GalNAc...) threonine glycan is linked to Thr258. Residue Thr267 is glycosylated (O-linked (GalNAc...) threonine; partial). Residue Thr271 is glycosylated (O-linked (GalNAc...) threonine). N-linked (GlcNAc...) asparagine glycosylation is present at Asn295. The helical transmembrane segment at 306–329 threads the bilayer; that stretch reads AICFTILGVLTSLVVLGTVAIVFL. Residues 330–385 are Cytoplasmic-facing; sequence NKCETWVSNLRYNHTFRKKKNLLLQYNSGEELAVNIIFPEKIDMTTFNKEAGDEEI.

In terms of assembly, monomer. Interacts with SH3RF2. In terms of processing, N- and O-glycosylated. Highly expressed in fetal liver, placenta, adult adrenal gland, brain, testis and ovary and, to a lesser degree, in adult kidney, muscle, thymus and heart.

It localises to the membrane. The protein resides in the cytoplasm. In terms of biological role, may have a role in neuroendocrine differentiation. Inhibits adipocyte differentiation. This chain is Protein delta homolog 1 (Dlk1), found in Mus musculus (Mouse).